The primary structure comprises 296 residues: 33 kDa chaperonin (296 aa).

2 disulfides stabilise this stretch: Cys-238/Cys-240 and Cys-271/Cys-274.

The protein belongs to the HSP33 family. In terms of processing, under oxidizing conditions two disulfide bonds are formed involving the reactive cysteines. Under reducing conditions zinc is bound to the reactive cysteines and the protein is inactive.

Its subcellular location is the cytoplasm. Its function is as follows. Redox regulated molecular chaperone. Protects both thermally unfolding and oxidatively damaged proteins from irreversible aggregation. Plays an important role in the bacterial defense system toward oxidative stress. The polypeptide is 33 kDa chaperonin (Clostridium botulinum (strain ATCC 19397 / Type A)).